A 715-amino-acid polypeptide reads, in one-letter code: MFNQHKVEIEWGGRPLILETGKIARQADGAVLATYGETKVLATVVSMKEPKPGLDFFPLTVNYQEKTYAAGKIPGGYFKREGRPSEKETLVSRLIDRPIRPLFADGYKNDTQIVVTVVQHDLENDPDILSIVATSAALTLSGVPFMGPVGGARVGYINGEYVLNPHIDEMQESKLDLVVAGTADAVLMVESEAKELGEELMLGAVMFGHKGFQPVIDAIIKLAEVAAKEPRDFTAPDYSALEGEMLKIVGDELSNAYKITDKQQRYAAVDAVKAKVKAAFAPAEGEEPKYTSEQIGSVFKELQAKVVRWNILDTGSRIDGRDLKTVRKIVSEVGVLPRTHGSALFTRGETQALVVATLGTGEDEQYVDSLTGMYKEKFLLHYNFPPYSVGETGRMGSPGRREIGHGKLAWRAIRPMLPSADQFPYTLRVVSEITESNGSSSMATVCGTSLALMDAGVPLAKPVAGIAMGLIKEGERFAVLSDILGDEDHLGDMDFKVAGTANGITSLQMDIKIEGITEEIMKIALDQAKDGRQHILGEMAHALTGARPELGEFAPRIEVMHIPTDKIRDVIGSGGKVIREIVEKTGAKINIEDDGTVKIASSNAKEIEAAKKWIHTIVAEPEVGEIYEGTVVKTADFGAFVNFFGPRDGLVHISQLANERVAKTSDVVKEGDKVWVKLMGFDERGKVRLSMKVVDQATGKEIVRDKRAEGEEDAA.

Positions 488 and 494 each coordinate Mg(2+). A KH domain is found at 555-614 (PRIEVMHIPTDKIRDVIGSGGKVIREIVEKTGAKINIEDDGTVKIASSNAKEIEAAKKWI). Residues 624–692 (GEIYEGTVVK…ERGKVRLSMK (69 aa)) enclose the S1 motif domain.

The protein belongs to the polyribonucleotide nucleotidyltransferase family. Mg(2+) is required as a cofactor.

Its subcellular location is the cytoplasm. The catalysed reaction is RNA(n+1) + phosphate = RNA(n) + a ribonucleoside 5'-diphosphate. Functionally, involved in mRNA degradation. Catalyzes the phosphorolysis of single-stranded polyribonucleotides processively in the 3'- to 5'-direction. This chain is Polyribonucleotide nucleotidyltransferase, found in Mesorhizobium japonicum (strain LMG 29417 / CECT 9101 / MAFF 303099) (Mesorhizobium loti (strain MAFF 303099)).